Reading from the N-terminus, the 502-residue chain is Cytochrome P450 monooxygenase orf6 (502 aa).

The helical transmembrane segment at 3-25 (ALWVLAVALVAYFLCLSIYRLFL) threads the bilayer. N-linked (GlcNAc...) asparagine glycosylation occurs at Asn-382. Heme is bound at residue Cys-445.

The protein belongs to the cytochrome P450 family. Heme serves as cofactor.

It localises to the membrane. The protein operates within mycotoxin biosynthesis. Cytochrome P450 monooxygenase; part of the gene cluster that mediates the biosynthesis of brefeldin A (BFA), a protein transport inhibitor that shows antiviral, antifungal, and antitumor properties. The proposed biosynthesis of BFA involves formation of an acyclic polyketide chain that is differentially tailored throughout the backbone. The highly reducing polyketide synthase Bref-PKS is proposed to synthesize the precisely reduced octaketide precursor, which could then be directly offloaded by the thiohydrolase enzyme Bref-TH followed by a cytochrome P450 monooxygenase-mediated formation of the cyclopentane ring and macrocyclization to afford 7-deoxy BFA. Alternatively, the first ring annulation can also occur on the ACP-tethered intermediate before the thiohydrolase release and lactonization. The C7-hydroxylation by another cytochrome P450 monooxygenase is believed to be the final step in the process to obtain the final structure of BFA. In addition to the HRPKS Bref-PKS and the thiohydrolase Bref-TH, the brefeldin A biosynthesis cluster contains 4 cytochrome p450 monooxygenases (called orf3 to orf6), as well a the probable cluster-specific transcription regulator orf8. The sequence is that of Cytochrome P450 monooxygenase orf6 from Eupenicillium brefeldianum (Penicillium brefeldianum).